The primary structure comprises 298 residues: MARRGLLISFFAIFSVLLQSSTSLISSSSVFVNPSKVKQVSSKPRAFVYEGFLTELECDHMVSLAKASLKRSAVADNDSGESKFSEVRTSSGTFISKGKDPIVSGIEDKISTWTFLPKENGEDIQVLRYEHGQKYDAHFDYFHDKVNIVRGGHRMATILMYLSNVTKGGETVFPDAEIPSRRVLSENKEDLSDCAKRGIAVKPRKGDALLFFNLHPDAIPDPLSLHGGCPVIEGEKWSATKWIHVDSFDRIVTPSGNCTDMNESCERWAVLGECTKNPEYMVGTTELPGYCRRSCKAC.

Topologically, residues 1 to 6 are cytoplasmic; sequence MARRGL. The chain crosses the membrane as a helical; Signal-anchor for type II membrane protein span at residues 7-25; the sequence is LISFFAIFSVLLQSSTSLI. Residues 26-298 lie on the Lumenal side of the membrane; it reads SSSSVFVNPS…GYCRRSCKAC (273 aa). N-linked (GlcNAc...) asparagine glycosylation is present at asparagine 77. One can recognise a Fe2OG dioxygenase domain in the interval 120–245; the sequence is NGEDIQVLRY…KWSATKWIHV (126 aa). Residues histidine 138 and aspartate 140 each contribute to the Fe cation site. N-linked (GlcNAc...) asparagine glycosylation occurs at asparagine 164. Histidine 226 contacts Fe cation. Lysine 236 is a 2-oxoglutarate binding site. N-linked (GlcNAc...) asparagine glycans are attached at residues asparagine 257 and asparagine 262. One can recognise a ShKT domain in the interval 258–298; it reads CTDMNESCERWAVLGECTKNPEYMVGTTELPGYCRRSCKAC. 3 cysteine pairs are disulfide-bonded: cysteine 258/cysteine 298, cysteine 265/cysteine 291, and cysteine 274/cysteine 295.

It belongs to the P4HA family. Fe(2+) is required as a cofactor. Requires L-ascorbate as cofactor.

The protein resides in the endoplasmic reticulum membrane. It carries out the reaction L-prolyl-[collagen] + 2-oxoglutarate + O2 = trans-4-hydroxy-L-prolyl-[collagen] + succinate + CO2. In terms of biological role, catalyzes the post-translational formation of 4-hydroxyproline in -Xaa-Pro-Gly- sequences in proline-rich peptide sequences of plant glycoproteins and other proteins. Hydroxyprolines are important constituent of many plant cell wall glycoproteins such as extensins, hydroxyproline-rich glycoproteins, lectins and arabinogalactan proteins. The sequence is that of Probable prolyl 4-hydroxylase 4 from Arabidopsis thaliana (Mouse-ear cress).